A 141-amino-acid chain; its full sequence is Hemoglobin subunit alpha-D (141 aa).

The 141-residue stretch at 1 to 141 (MLTADDKKLL…VAAVLAEKYR (141 aa)) folds into the Globin domain. Residues histidine 58 and histidine 87 each coordinate heme b.

This sequence belongs to the globin family. As to quaternary structure, heterotetramer of two alpha-D chains and two beta chains. Red blood cells.

Functionally, involved in oxygen transport from the lung to the various peripheral tissues. This chain is Hemoglobin subunit alpha-D (HBAD), found in Anser anser anser (Western greylag goose).